The chain runs to 157 residues: Small ribosomal subunit protein uS7 (157 aa).

Belongs to the universal ribosomal protein uS7 family. Part of the 30S ribosomal subunit. Contacts proteins S9 and S11.

In terms of biological role, one of the primary rRNA binding proteins, it binds directly to 16S rRNA where it nucleates assembly of the head domain of the 30S subunit. Is located at the subunit interface close to the decoding center, probably blocks exit of the E-site tRNA. The chain is Small ribosomal subunit protein uS7 from Blochmanniella floridana.